Here is a 240-residue protein sequence, read N- to C-terminus: Probable phosphatase Pcar_2586 (240 aa).

Zn(2+) contacts are provided by His-12, His-14, His-20, His-45, Glu-78, His-105, His-136, Asp-197, and His-199.

This sequence belongs to the PHP family. Zn(2+) is required as a cofactor.

This Syntrophotalea carbinolica (strain DSM 2380 / NBRC 103641 / GraBd1) (Pelobacter carbinolicus) protein is Probable phosphatase Pcar_2586.